A 165-amino-acid chain; its full sequence is UBA-like domain-containing protein 2-B (165 aa).

The disordered stretch occupies residues glutamine 119 to arginine 165.

It belongs to the UBALD family.

This is UBA-like domain-containing protein 2-B (ubald2-b) from Xenopus laevis (African clawed frog).